Reading from the N-terminus, the 388-residue chain is Alanine racemase (388 aa).

Residue lysine 44 is the Proton acceptor; specific for D-alanine of the active site. Lysine 44 carries the post-translational modification N6-(pyridoxal phosphate)lysine. Arginine 142 contacts substrate. Tyrosine 273 serves as the catalytic Proton acceptor; specific for L-alanine. Methionine 321 contacts substrate.

This sequence belongs to the alanine racemase family. The cofactor is pyridoxal 5'-phosphate.

It carries out the reaction L-alanine = D-alanine. Its pathway is amino-acid biosynthesis; D-alanine biosynthesis; D-alanine from L-alanine: step 1/1. Its function is as follows. Catalyzes the interconversion of L-alanine and D-alanine. May also act on other amino acids. The protein is Alanine racemase (alr) of Mycobacterium avium (strain 104).